The chain runs to 301 residues: Mitochondrial ornithine transporter 1 (301 aa).

The next 6 helical transmembrane spans lie at 5 to 25 (PAIQ…ACVL), 68 to 88 (SPAL…YGFC), 110 to 130 (AAAG…TELV), 168 to 188 (GFYH…FFFF), 207 to 227 (LGPV…WLAV), and 237 to 257 (IQVL…LSIV). Solcar repeat units follow at residues 7–91 (IQAA…CQQV), 104–197 (LSDL…SRSF), and 207–293 (LGPV…SRKL).

It belongs to the mitochondrial carrier (TC 2.A.29) family. As to expression, widely expressed, with highest levels in the liver, testis and kidney. In the brain, expressed at high levels in the hypothalamus.

Its subcellular location is the mitochondrion inner membrane. It localises to the mitochondrion membrane. The catalysed reaction is L-citrulline(in) + L-ornithine(out) + H(+)(in) = L-citrulline(out) + L-ornithine(in) + H(+)(out). It carries out the reaction L-ornithine(in) + L-arginine(out) = L-ornithine(out) + L-arginine(in). It catalyses the reaction L-ornithine(out) + L-lysine(in) = L-ornithine(in) + L-lysine(out). The enzyme catalyses L-lysine(out) + H(+)(in) = L-lysine(in) + H(+)(out). The catalysed reaction is L-ornithine(out) + H(+)(in) = L-ornithine(in) + H(+)(out). Its activity is regulated as follows. Inhibited by pyridoxal 5'-phosphate as well as by mercurials (mersalyl, p-chloromercuribenzene sulfonate, and mercuric chloride), N-ethylmaleimide and spermine. Mitochondrial ornithine-citrulline antiporter. Catalyzes the exchange between cytosolic ornithine and mitochondrial citrulline plus an H(+), the proton compensates the positive charge of ornithine thus leading to an electroneutral transport. Plays a crucial role in the urea cycle, by connecting the cytosolic and the intramitochondrial reactions of the urea cycle. Lysine and arginine are also transported by the antiport mechanism. In addition, catalyzes an electroneutral exchange of ornithine or lysine for H(+), a reaction driven by the pH gradient across the inner membrane. The polypeptide is Mitochondrial ornithine transporter 1 (Mus musculus (Mouse)).